Here is a 79-residue protein sequence, read N- to C-terminus: MPHVICEPCIGVKDQSCVEVCPVECIYDGGDQFYIHPEECIDCGACVPACPVNAIYPEEDVPEQWKSYIEKNRKLAGLE.

2 consecutive 4Fe-4S ferredoxin-type domains span residues 2 to 30 and 31 to 60; these read PHVI…YDGG and DQFY…PEED. Positions 9 and 17 each coordinate [3Fe-4S] cluster. [4Fe-4S] cluster-binding residues include Cys-21, Cys-40, Cys-43, and Cys-46. Cys-50 provides a ligand contact to [3Fe-4S] cluster.

It depends on [4Fe-4S] cluster as a cofactor. Requires [3Fe-4S] cluster as cofactor.

Functionally, ferredoxins are iron-sulfur proteins that transfer electrons in a wide variety of metabolic reactions. The polypeptide is Ferredoxin (Thermus thermophilus (strain ATCC 27634 / DSM 579 / HB8)).